The sequence spans 166 residues: Ribosome maturation factor RimM (166 aa).

The PRC barrel domain maps to 94 to 165 (EGEYYLGKLI…TIELKVLDLL (72 aa)).

Belongs to the RimM family. In terms of assembly, binds ribosomal protein uS19.

It localises to the cytoplasm. An accessory protein needed during the final step in the assembly of 30S ribosomal subunit, possibly for assembly of the head region. Essential for efficient processing of 16S rRNA. May be needed both before and after RbfA during the maturation of 16S rRNA. It has affinity for free ribosomal 30S subunits but not for 70S ribosomes. The sequence is that of Ribosome maturation factor RimM from Borrelia garinii subsp. bavariensis (strain ATCC BAA-2496 / DSM 23469 / PBi) (Borreliella bavariensis).